Reading from the N-terminus, the 190-residue chain is Cypemycin cysteine dehydrogenase (decarboxylating) (190 aa).

This sequence belongs to the HFCD (homooligomeric flavin containing Cys decarboxylase) superfamily.

The enzyme catalyses [cypemycin](1-18)-L-Cys-L-Leu-L-Val-L-Cys + A = C(3,19),S(21)-[cypemycin](1-18)-L-Ala-L-Leu-N-thioethenyl-L-valinamide + hydrogen sulfide + AH2 + CO2. In terms of biological role, involved in the biosynthesis of the lanaridin cypemycin. This is Cypemycin cysteine dehydrogenase (decarboxylating) from Streptomyces sp.